The primary structure comprises 369 residues: Peridinin-chlorophyll a-binding protein 2, chloroplastic (369 aa).

The transit peptide at 1 to 56 directs the protein to the chloroplast; the sequence is MVRSGKKAVVLATVAFCATSVVQKTCGFVPSPLRQRAAAAGAAASVATMFAPAAFA. Tandem repeats lie at residues 57–219 and 220–369.

In terms of assembly, homotrimer.

The protein resides in the plastid. It localises to the chloroplast. Functionally, water-soluble antenna for capture of solar energy in the blue-green range. Peridinin is an asymmetric carotenoid. This Amphidinium carterae (Dinoflagellate) protein is Peridinin-chlorophyll a-binding protein 2, chloroplastic.